A 363-amino-acid polypeptide reads, in one-letter code: Somatostatin receptor type 5 (363 aa).

The Extracellular segment spans residues 1–35; the sequence is MEPLSLASTPSWNASAASSGNHNWSLVGSASPMGA. Asn-13 and Asn-23 each carry an N-linked (GlcNAc...) asparagine glycan. Residues 36–63 form a helical membrane-spanning segment; sequence RAVLVPVLYLLVCTVGLSGNTLVIYVVL. Residues 64–73 lie on the Cytoplasmic side of the membrane; it reads RHAKMKTVTN. The helical transmembrane segment at 74–99 threads the bilayer; sequence VYILNLAVADVLFMLGLPFLATQNAV. The Extracellular segment spans residues 100 to 111; the sequence is VSYWPFGSFLCR. Cys-110 and Cys-185 are disulfide-bonded. Residues 112–133 form a helical membrane-spanning segment; it reads LVMTLDGINQFTSIFCLMVMSV. The Cytoplasmic segment spans residues 134-155; sequence DRYLAVVHPLRSARWRRPRVAK. Residues 156–176 traverse the membrane as a helical segment; it reads MASAAVWVFSLLMSLPLLVFA. Topologically, residues 177 to 196 are extracellular; that stretch reads DVQEGWGTCNLSWPEPVGLW. N-linked (GlcNAc...) asparagine glycosylation is present at Asn-186. A helical transmembrane segment spans residues 197 to 221; it reads GAAFITYTSVLGFFGPLLVICLCYL. Topologically, residues 222 to 247 are cytoplasmic; sequence LIVVKVKAAGMRVGSSRRRRSEPKVT. The helical transmembrane segment at 248–273 threads the bilayer; it reads RMVVVVVLVFVGCWLPFFIVNIVNLA. The Extracellular segment spans residues 274-283; that stretch reads FTLPEEPTSA. A helical transmembrane segment spans residues 284–308; sequence GLYFFVVVLSYANSCANPLLYGFLS. Topologically, residues 309 to 363 are cytoplasmic; the sequence is DNFRQSFRKVLCLRRGYGMEDADAIEPRPDKSGRPQATLPTRSCEANGLMQTSRI. Cys-320 carries S-palmitoyl cysteine; by ZDHHC5 lipidation. The segment at 331-363 is disordered; that stretch reads DAIEPRPDKSGRPQATLPTRSCEANGLMQTSRI.

Belongs to the G-protein coupled receptor 1 family. As to quaternary structure, heterodimer with SSTR2. Heterodimerization with SSTR2 increases cell growth inhibition activity of SSTR2. Palmitoylated at Cys-320 by ZDHHC5, but not ZDHHC8. Palmitoylation creates an additional intracellular loop which is thought to be important for efficient coupling to G-proteins and may target the protein to lipid rafts. As to expression, prominent in the pituitary and small intestine. Low levels in islets and spleen. Not detected in kidney, pancreas, cerebellum, or cortex.

Its subcellular location is the cell membrane. Receptor for somatostatin-28. The activity of this receptor is mediated by G proteins which inhibit adenylyl cyclase. Increases cell growth inhibition activity of SSTR2 following heterodimerization. This Rattus norvegicus (Rat) protein is Somatostatin receptor type 5 (Sstr5).